We begin with the raw amino-acid sequence, 454 residues long: Adenylosuccinate synthetase isozyme 1 B (454 aa).

The disordered stretch occupies residues 1 to 24 (MSGTRASNDRSSHPGAGGHKRPRY). Residues 39 to 45 (GDEGKGK) and 67 to 69 (GHT) each bind GTP. D40 (proton acceptor) is an active-site residue. Mg(2+) is bound by residues D40 and G67. D40 contacts substrate. IMP contacts are provided by residues 40–43 (DEGK), 65–68 (NAGH), T160, R174, N253, T268, and R332. The active-site Proton donor is the H68. 328 to 334 (VTTGRKR) is a binding site for substrate. Residues R334, 360–362 (KLD), and 442–445 (GVGK) each bind GTP.

It belongs to the adenylosuccinate synthetase family. As to quaternary structure, homodimer. The cofactor is Mg(2+).

The protein resides in the cytoplasm. It catalyses the reaction IMP + L-aspartate + GTP = N(6)-(1,2-dicarboxyethyl)-AMP + GDP + phosphate + 2 H(+). It functions in the pathway purine metabolism; AMP biosynthesis via de novo pathway; AMP from IMP: step 1/2. In terms of biological role, component of the purine nucleotide cycle (PNC), which interconverts IMP and AMP to regulate the nucleotide levels in various tissues, and which contributes to glycolysis and ammoniagenesis. Catalyzes the first committed step in the biosynthesis of AMP from IMP. This Xenopus laevis (African clawed frog) protein is Adenylosuccinate synthetase isozyme 1 B (adss1-b).